The sequence spans 198 residues: Pyridoxal 5'-phosphate synthase subunit PdxT (198 aa).

Gly52 to Ser54 provides a ligand contact to L-glutamine. The active-site Nucleophile is Cys84. L-glutamine contacts are provided by residues Arg115 and Ile143–Arg144. Active-site charge relay system residues include His179 and Glu181.

Belongs to the glutaminase PdxT/SNO family. As to quaternary structure, in the presence of PdxS, forms a dodecamer of heterodimers. Only shows activity in the heterodimer.

It carries out the reaction aldehydo-D-ribose 5-phosphate + D-glyceraldehyde 3-phosphate + L-glutamine = pyridoxal 5'-phosphate + L-glutamate + phosphate + 3 H2O + H(+). The enzyme catalyses L-glutamine + H2O = L-glutamate + NH4(+). It participates in cofactor biosynthesis; pyridoxal 5'-phosphate biosynthesis. Catalyzes the hydrolysis of glutamine to glutamate and ammonia as part of the biosynthesis of pyridoxal 5'-phosphate. The resulting ammonia molecule is channeled to the active site of PdxS. The protein is Pyridoxal 5'-phosphate synthase subunit PdxT of Methanococcoides burtonii (strain DSM 6242 / NBRC 107633 / OCM 468 / ACE-M).